A 603-amino-acid chain; its full sequence is Pyruvate oxidase (603 aa).

A core region spans residues 1–191; that stretch reads MVMKQTKQTN…WYASANSYQT (191 aa). The FAD-binding stretch occupies residues 192–342; it reads PLLPEPDVQA…ILAQVSERES (151 aa). The segment at 343–603 is thiamine pyrophosphate binding; sequence TPWWQANLAN…LQHQIGQGGF (261 aa). Mg(2+) contacts are provided by Asp447, Asn474, and Gln476.

The protein belongs to the TPP enzyme family. In terms of assembly, homotetramer. The cofactor is FAD. Mg(2+) is required as a cofactor. Requires thiamine diphosphate as cofactor.

It catalyses the reaction pyruvate + phosphate + O2 + H(+) = acetyl phosphate + H2O2 + CO2. Its function is as follows. Important for the aerobic growth. Decarboxylates pyruvate in four steps. The energy released is partially stored in acetyl phosphate. The polypeptide is Pyruvate oxidase (pox5) (Lactiplantibacillus plantarum (strain ATCC BAA-793 / NCIMB 8826 / WCFS1) (Lactobacillus plantarum)).